The primary structure comprises 622 residues: MPPTQAESVIRSIIREIGQECAAHGEIVSETLIAFMVKAVVLDPSNGFNMDRTLMKSDVQNLVKLCMTRLLDTKNPSLDTIKMQVYFDMNYTNRVEFLEEHHRVLESRLGSVTREITDNRACAKEELESLYRKIISYVLLRSGLGSPTDIKTVREVTAALQSVFPQAELGTFLTLSKKDKERQLKELTMIVTGIRLFNRDCGKGGEGIDDLPAVLHVAIPATMQHIDYQLETARSQVYRYTAILEKAANDPLMRAELQPYMLKEALYNIRQYEVFLQIILSDIITGAQEVEMMTKQLGAHLEQLKMTIKSKIAVPTSQVFPIFIALSTLWTSLQDETIVVGVLSNLFTHIQPFLGAHELYFPERVMQCHLNGATVKTDVCRMKEHMEDRVNVADFRKLEWLFPETTANFDKLLIQYRGFCAYTFAATDGLLLPGNPAIGILKYKEKYYTFNSKDAAYSFAENPEHYIDIVREKAKKNTELIQLLELHQQFETFIPYSQMRDADKHYIKPITKCESSTQTNTHILPPTIVRSYEWNEWELRRKAIKLANLRQKVTHSVQTDLSHLRRENCSQVYPPKDTSTQSMREDSTGVPRPQIYLAGLRGGKSEITDEVKVNLTRDVDET.

Positions 570-592 (SQVYPPKDTSTQSMREDSTGVPR) are disordered.

This sequence belongs to the CFAP206 family.

Its subcellular location is the cytoplasm. It localises to the cytoskeleton. The protein localises to the cilium axoneme. The protein resides in the cilium basal body. In terms of biological role, essential for sperm motility and is involved in the regulation of the beating frequency of motile cilia on the epithelial cells of the respiratory tract. Required for the establishment of radial spokes in sperm flagella. This chain is Cilia- and flagella-associated protein 206, found in Homo sapiens (Human).